Here is a 439-residue protein sequence, read N- to C-terminus: ATP-dependent RNA helicase RhlB (439 aa).

The Q motif signature appears at Gln9 to Ala37. Residues Leu40–Val219 form the Helicase ATP-binding domain. Residue Ala53–Thr60 coordinates ATP. The DEAD box signature appears at Asp165–Asp168. The region spanning Lys243–Leu390 is the Helicase C-terminal domain. Positions Pro395–Pro439 are disordered. The span at Ser425–Pro439 shows a compositional bias: basic residues.

It belongs to the DEAD box helicase family. RhlB subfamily. Component of the RNA degradosome, which is a multiprotein complex involved in RNA processing and mRNA degradation.

Its subcellular location is the cytoplasm. It carries out the reaction ATP + H2O = ADP + phosphate + H(+). Its function is as follows. DEAD-box RNA helicase involved in RNA degradation. Has RNA-dependent ATPase activity and unwinds double-stranded RNA. This chain is ATP-dependent RNA helicase RhlB, found in Shewanella sp. (strain MR-4).